The sequence spans 446 residues: RUN domain-containing protein 3A (446 aa).

An interaction with RAP2A region spans residues 1–298 (MEASFVQTTM…LQLQLEEAAA (298 aa)). The RUN domain occupies 52–189 (DDSSEEFVNF…IDFSFCLKGE (138 aa)). Position 215 is a phosphothreonine (Thr215). Residues 216–239 (DEEERHSAESSTSEDNSPEHPYLP) form a disordered region. The residue at position 232 (Ser232) is a Phosphoserine. Residues 267–322 (YLEELVRLRESQLKDLEAENRRLQLQLEEAAAQNQREKRELEGVILELQEQLTGLI) are a coiled coil. Residues 372 to 384 (PLSAEASLSSDSQ) show a composition bias toward polar residues. The tract at residues 372–403 (PLSAEASLSSDSQRLGEAKRDEEPWGPIGKDP) is disordered. Residues 385 to 394 (RLGEAKRDEE) show a composition bias toward basic and acidic residues. Phosphoserine occurs at positions 416 and 419.

It belongs to the RUNDC3 family. As to quaternary structure, interacts with the GTP-bound form of RAP2A. In terms of tissue distribution, brain.

Functionally, may act as an effector of RAP2A in neuronal cells. This Mus musculus (Mouse) protein is RUN domain-containing protein 3A (Rundc3a).